The sequence spans 412 residues: Serine hydroxymethyltransferase (412 aa).

(6S)-5,6,7,8-tetrahydrofolate-binding positions include leucine 120 and 124–126 (GHL). Lysine 228 bears the N6-(pyridoxal phosphate)lysine mark. 353–355 (SPF) provides a ligand contact to (6S)-5,6,7,8-tetrahydrofolate.

The protein belongs to the SHMT family. In terms of assembly, homodimer. Requires pyridoxal 5'-phosphate as cofactor.

The protein localises to the cytoplasm. It carries out the reaction (6R)-5,10-methylene-5,6,7,8-tetrahydrofolate + glycine + H2O = (6S)-5,6,7,8-tetrahydrofolate + L-serine. It participates in one-carbon metabolism; tetrahydrofolate interconversion. The protein operates within amino-acid biosynthesis; glycine biosynthesis; glycine from L-serine: step 1/1. Its function is as follows. Catalyzes the reversible interconversion of serine and glycine with tetrahydrofolate (THF) serving as the one-carbon carrier. This reaction serves as the major source of one-carbon groups required for the biosynthesis of purines, thymidylate, methionine, and other important biomolecules. Also exhibits THF-independent aldolase activity toward beta-hydroxyamino acids, producing glycine and aldehydes, via a retro-aldol mechanism. The protein is Serine hydroxymethyltransferase of Lachnoclostridium phytofermentans (strain ATCC 700394 / DSM 18823 / ISDg) (Clostridium phytofermentans).